We begin with the raw amino-acid sequence, 163 residues long: Nucleotide-binding protein GK0742 (163 aa).

The protein belongs to the YajQ family.

Nucleotide-binding protein. The polypeptide is Nucleotide-binding protein GK0742 (Geobacillus kaustophilus (strain HTA426)).